The following is a 470-amino-acid chain: Glycine--tRNA ligase (470 aa).

Residues R94 and E183 each contribute to the substrate site. ATP is bound by residues 215 to 217, 225 to 230, 298 to 299, and 342 to 345; these read RNE, FRMVEF, EI, and GCDR. 230 to 234 is a binding site for substrate; that stretch reads FEQME. Substrate is bound at residue 338 to 342; sequence ETSSG.

The protein belongs to the class-II aminoacyl-tRNA synthetase family. As to quaternary structure, homodimer.

Its subcellular location is the cytoplasm. The catalysed reaction is tRNA(Gly) + glycine + ATP = glycyl-tRNA(Gly) + AMP + diphosphate. In terms of biological role, catalyzes the attachment of glycine to tRNA(Gly). This chain is Glycine--tRNA ligase, found in Chlorobaculum tepidum (strain ATCC 49652 / DSM 12025 / NBRC 103806 / TLS) (Chlorobium tepidum).